A 333-amino-acid polypeptide reads, in one-letter code: MIDITLPLTDIHRHLDGNIRAQTILDLGRQFNIALPAQTLETLIPHVQVTSTEPDLVSFLTKLDWGVKVLASLDACRRVAFENIEDAARNGLHYVELRFSPGYMAMAHQLPIAGVVEAVIDGVRDGCNTFGVEARLIGIMSRTFGEAACLQELDALLAHRENITALDLAGDELGFPGSLFLSHFNRARDAGWHITVHAGEAAGPESIWQAIRELGAERIGHGVKAVEDRALMDFLVQQRIGIESCLTSNIQTSTIASLADHPLKTFLEHGVLASLNTDDPAVQGVDIIHEYHVAAPAAGLSREQIRQAQINGLEIAFLSDGEKRALREKVAAA.

Zn(2+) is bound by residues histidine 12 and histidine 14. 3 residues coordinate substrate: histidine 14, aspartate 16, and glycine 170. Histidine 197 serves as a coordination point for Zn(2+). Glutamate 200 functions as the Proton donor in the catalytic mechanism. Zn(2+) is bound at residue aspartate 278. Residue aspartate 279 coordinates substrate.

This sequence belongs to the metallo-dependent hydrolases superfamily. Adenosine and AMP deaminases family. Adenosine deaminase subfamily. Zn(2+) is required as a cofactor.

It carries out the reaction adenosine + H2O + H(+) = inosine + NH4(+). The enzyme catalyses 2'-deoxyadenosine + H2O + H(+) = 2'-deoxyinosine + NH4(+). Functionally, catalyzes the hydrolytic deamination of adenosine and 2-deoxyadenosine. The chain is Adenosine deaminase from Salmonella gallinarum (strain 287/91 / NCTC 13346).